The chain runs to 101 residues: Small ribosomal subunit protein bS21 (101 aa).

The segment covering 36 to 52 has biased composition (basic and acidic residues); that stretch reads YEKPSEKKAREKAEAVR. The interval 36-101 is disordered; that stretch reads YEKPSEKKAR…GPGAGPRGPR (66 aa). Basic residues predominate over residues 53-62; sequence RARKLARKKL. Over residues 83 to 101 the composition is skewed to gly residues; it reads PGAGGPGAGGPGAGPRGPR.

It belongs to the bacterial ribosomal protein bS21 family.

The polypeptide is Small ribosomal subunit protein bS21 (Rhodopseudomonas palustris (strain HaA2)).